The chain runs to 140 residues: Nucleoside diphosphate kinase (140 aa).

ATP is bound by residues lysine 11, phenylalanine 59, arginine 87, threonine 93, arginine 104, and asparagine 114. Histidine 117 serves as the catalytic Pros-phosphohistidine intermediate.

Belongs to the NDK family. In terms of assembly, homotetramer. It depends on Mg(2+) as a cofactor.

Its subcellular location is the cytoplasm. The catalysed reaction is a 2'-deoxyribonucleoside 5'-diphosphate + ATP = a 2'-deoxyribonucleoside 5'-triphosphate + ADP. It catalyses the reaction a ribonucleoside 5'-diphosphate + ATP = a ribonucleoside 5'-triphosphate + ADP. In terms of biological role, major role in the synthesis of nucleoside triphosphates other than ATP. The ATP gamma phosphate is transferred to the NDP beta phosphate via a ping-pong mechanism, using a phosphorylated active-site intermediate. In Rhodopseudomonas palustris (strain BisB5), this protein is Nucleoside diphosphate kinase.